The chain runs to 214 residues: Urease accessory protein UreE (214 aa).

A disordered region spans residues 163 to 214; the sequence is NAEPSGVDHSHEATDSGHGYGEDHDHDHSHDHNHDHDHNHDHDHSHSHDSHE. The segment covering 168–214 has biased composition (basic and acidic residues); it reads GVDHSHEATDSGHGYGEDHDHDHSHDHNHDHDHNHDHDHSHSHDSHE.

Belongs to the UreE family.

It localises to the cytoplasm. Functionally, involved in urease metallocenter assembly. Binds nickel. Probably functions as a nickel donor during metallocenter assembly. This is Urease accessory protein UreE from Natronomonas pharaonis (strain ATCC 35678 / DSM 2160 / CIP 103997 / JCM 8858 / NBRC 14720 / NCIMB 2260 / Gabara) (Halobacterium pharaonis).